An 817-amino-acid polypeptide reads, in one-letter code: Fibroblast growth factor receptor 2 (817 aa).

Residues 1–22 form the signal peptide; that stretch reads MFARGWLLGALLLMTLATVSVA. At 23 to 377 the chain is on the extracellular side; sequence RPSLKIDLVN…ETDYPPDYVE (355 aa). Ig-like C2-type domains lie at 26–126, 159–247, and 256–358; these read LKID…VNVT, PEKM…YTLD, and PILQ…AWLT. N-linked (GlcNAc...) asparagine glycosylation is found at asparagine 32, asparagine 84, and asparagine 124. Cysteines 63 and 108 form a disulfide. The heparin-binding stretch occupies residues 161-178; that stretch reads KMEKKLHAVPAANTVKFR. Cysteine 179 and cysteine 231 are joined by a disulfide. N-linked (GlcNAc...) asparagine glycosylation is found at asparagine 228, asparagine 265, asparagine 297, asparagine 318, and asparagine 331. A disulfide bond links cysteine 278 and cysteine 342. The chain crosses the membrane as a helical span at residues 378 to 398; that stretch reads IAIYCIGVFLIACMVVIVVVC. The Cytoplasmic portion of the chain corresponds to 399–817; that stretch reads RMRTSAKKPD…YQHINGGIKT (419 aa). The tract at residues 429–465 is disordered; that stretch reads TVSSDSSSSMSSSTPLVRITTRRSSAHDDPIPEYDLP. Residues 431 to 441 show a composition bias toward low complexity; it reads SSDSSSSMSSS. At tyrosine 462 the chain carries Phosphotyrosine; by autocatalysis. The Protein kinase domain maps to 477–766; sequence LTLGKPLGEG…LTLATNEEYL (290 aa). ATP contacts are provided by residues 483–491, lysine 513, 561–563, and asparagine 567; these read LGEGCFGQV and EYA. Phosphotyrosine; by autocatalysis is present on tyrosine 582. Residue aspartate 622 is the Proton acceptor of the active site. Residues tyrosine 652, tyrosine 653, and tyrosine 765 each carry the phosphotyrosine; by autocatalysis modification.

The protein belongs to the protein kinase superfamily. Tyr protein kinase family. Fibroblast growth factor receptor subfamily. Monomer. Homodimer after ligand binding. Autophosphorylated. Binding of FGF family members together with heparan sulfate proteoglycan or heparin promotes receptor dimerization and autophosphorylation on tyrosine residues. Autophosphorylation occurs in trans between the two FGFR molecules present in the dimer. Post-translationally, N-glycosylated in the endoplasmic reticulum. The N-glycan chains undergo further maturation to an Endo H-resistant form in the Golgi apparatus. In terms of processing, ubiquitinated. FGFR2 is rapidly ubiquitinated after autophosphorylation, leading to internalization and degradation. Subject to degradation both in lysosomes and by the proteasome.

The protein localises to the cell membrane. The protein resides in the golgi apparatus. It localises to the cytoplasmic vesicle. The enzyme catalyses L-tyrosyl-[protein] + ATP = O-phospho-L-tyrosyl-[protein] + ADP + H(+). Its activity is regulated as follows. Present in an inactive conformation in the absence of bound ligand. Ligand binding leads to dimerization and activation by autophosphorylation on tyrosine residues. Its function is as follows. Tyrosine-protein kinase that acts as a cell-surface receptor for fibroblast growth factors and plays an essential role in the regulation of cell proliferation, differentiation, migration and apoptosis, and in the regulation of embryonic development. Required for normal embryonic patterning, limb bud development, lung morphogenesis, osteogenesis and skin development. Plays an essential role in the regulation of osteoblast differentiation, proliferation and apoptosis, and is required for normal skeleton development. Promotes cell proliferation in keratinocytes and immature osteoblasts, but promotes apoptosis in differentiated osteoblasts. Phosphorylates PLCG1, FRS2 and PAK4. Ligand binding leads to the activation of several signaling cascades. Activation of PLCG1 leads to the production of the cellular signaling molecules diacylglycerol and inositol 1,4,5-trisphosphate. Phosphorylation of FRS2 triggers recruitment of GRB2, GAB1, PIK3R1 and SOS1, and mediates activation of RAS, MAPK1/ERK2, MAPK3/ERK1 and the MAP kinase signaling pathway, as well as of the AKT1 signaling pathway. FGFR2 signaling is down-regulated by ubiquitination, internalization and degradation. Mutations that lead to constitutive kinase activation or impair normal FGFR2 maturation, internalization and degradation lead to aberrant signaling. Over-expressed FGFR2 promotes activation of STAT1. This chain is Fibroblast growth factor receptor 2 (fgfr2), found in Danio rerio (Zebrafish).